The following is a 41-amino-acid chain: MKDFVTYLSTAPVIALAWMSFTAGLLIEINRFFPDPLVFTF.

The chain crosses the membrane as a helical span at residues 7 to 27; sequence YLSTAPVIALAWMSFTAGLLI.

This sequence belongs to the PsaJ family.

The protein resides in the plastid. It is found in the chloroplast thylakoid membrane. Its function is as follows. May help in the organization of the PsaE and PsaF subunits. The polypeptide is Photosystem I reaction center subunit IX (Tupiella akineta (Green alga)).